The chain runs to 242 residues: Pyridoxine 5'-phosphate synthase (242 aa).

3-amino-2-oxopropyl phosphate is bound at residue N6. 8–9 (DH) contributes to the 1-deoxy-D-xylulose 5-phosphate binding site. R17 contributes to the 3-amino-2-oxopropyl phosphate binding site. The active-site Proton acceptor is the H42. 1-deoxy-D-xylulose 5-phosphate contacts are provided by R44 and H49. E69 functions as the Proton acceptor in the catalytic mechanism. T99 lines the 1-deoxy-D-xylulose 5-phosphate pocket. H193 functions as the Proton donor in the catalytic mechanism. Residues G194 and 217-218 (GH) each bind 3-amino-2-oxopropyl phosphate.

It belongs to the PNP synthase family. In terms of assembly, homooctamer; tetramer of dimers.

It localises to the cytoplasm. It catalyses the reaction 3-amino-2-oxopropyl phosphate + 1-deoxy-D-xylulose 5-phosphate = pyridoxine 5'-phosphate + phosphate + 2 H2O + H(+). Its pathway is cofactor biosynthesis; pyridoxine 5'-phosphate biosynthesis; pyridoxine 5'-phosphate from D-erythrose 4-phosphate: step 5/5. Functionally, catalyzes the complicated ring closure reaction between the two acyclic compounds 1-deoxy-D-xylulose-5-phosphate (DXP) and 3-amino-2-oxopropyl phosphate (1-amino-acetone-3-phosphate or AAP) to form pyridoxine 5'-phosphate (PNP) and inorganic phosphate. The polypeptide is Pyridoxine 5'-phosphate synthase (Aquifex aeolicus (strain VF5)).